Consider the following 1003-residue polypeptide: Spheroidin (1003 aa).

Ser-2 carries the N-acetylserine; by host modification. Positions 953–970 (DANSSSSDSCSDSSSSSE) are enriched in low complexity. The disordered stretch occupies residues 953–979 (DANSSSSDSCSDSSSSSESESDSDGCC).

In terms of assembly, may form disulfide-bond-linked aggregates.

Major component of viral occlusion bodies, the protective complexes in which the virions are embedded in the cytoplasm of their insect hosts. The sequence is that of Spheroidin from Amsacta (AmEPV).